The following is a 465-amino-acid chain: ATP synthase subunit beta (465 aa).

152–159 provides a ligand contact to ATP; it reads GGAGVGKT.

Belongs to the ATPase alpha/beta chains family. In terms of assembly, F-type ATPases have 2 components, CF(1) - the catalytic core - and CF(0) - the membrane proton channel. CF(1) has five subunits: alpha(3), beta(3), gamma(1), delta(1), epsilon(1). CF(0) has three main subunits: a(1), b(2) and c(9-12). The alpha and beta chains form an alternating ring which encloses part of the gamma chain. CF(1) is attached to CF(0) by a central stalk formed by the gamma and epsilon chains, while a peripheral stalk is formed by the delta and b chains.

It is found in the cell inner membrane. The enzyme catalyses ATP + H2O + 4 H(+)(in) = ADP + phosphate + 5 H(+)(out). Functionally, produces ATP from ADP in the presence of a proton gradient across the membrane. The catalytic sites are hosted primarily by the beta subunits. The sequence is that of ATP synthase subunit beta from Campylobacter concisus (strain 13826).